The sequence spans 284 residues: MCCIAGAPSLSGRERAEKEGIRFKENKGELKIGIINLMPFKEEVEYQFYAVLGRFDISVEVEFLYPENHVFKNTDGSYIKDNYYPLGELNNRNYDAIIMTGAPVELLDFQKVNYWDEIKNLIKSNKLPALYICWGAQAALYVKYGIEKFTLNEKLLGIFRHRTNKNPFVSGEFWAPHSRNTQNSSKDIKNAGLRILAESDEAGVYMASDRDYREFYISGHGEYQRERLKYEYSRDQNLFPKNYFPEDDPKKEPPMKWDSHRKEFYYKWLSHIREKKFSNISDKR.

Cysteine 133 serves as the catalytic Acyl-thioester intermediate. Substrate-binding residues include lysine 154 and serine 178. Residue histidine 220 is the Proton acceptor of the active site. Glutamate 222 is a catalytic residue. Substrate is bound at residue arginine 234.

It belongs to the MetA family.

Its subcellular location is the cytoplasm. The enzyme catalyses L-homoserine + acetyl-CoA = O-acetyl-L-homoserine + CoA. Its pathway is amino-acid biosynthesis; L-methionine biosynthesis via de novo pathway; O-acetyl-L-homoserine from L-homoserine: step 1/1. Its function is as follows. Transfers an acetyl group from acetyl-CoA to L-homoserine, forming acetyl-L-homoserine. The protein is Homoserine O-acetyltransferase 2 of Ilyobacter polytropus (strain ATCC 51220 / DSM 2926 / LMG 16218 / CuHBu1).